An 87-amino-acid chain; its full sequence is Large ribosomal subunit protein bL27 (87 aa).

Residues 1–21 (MAHKKAGGSSRNGRDSESKRL) are disordered.

This sequence belongs to the bacterial ribosomal protein bL27 family.

This is Large ribosomal subunit protein bL27 from Paraburkholderia phytofirmans (strain DSM 17436 / LMG 22146 / PsJN) (Burkholderia phytofirmans).